Here is a 342-residue protein sequence, read N- to C-terminus: Probable dual-specificity RNA methyltransferase RlmN (342 aa).

Catalysis depends on Glu91, which acts as the Proton acceptor. Positions 97–327 constitute a Radical SAM core domain; sequence YKHGNSICVS…TTIRREMGAD (231 aa). Cys104 and Cys332 are disulfide-bonded. [4Fe-4S] cluster contacts are provided by Cys111, Cys115, and Cys118. Residues 158–159, Ser190, 213–215, and Asn289 contribute to the S-adenosyl-L-methionine site; these read GE and SLH. Cys332 acts as the S-methylcysteine intermediate in catalysis.

Belongs to the radical SAM superfamily. RlmN family. Requires [4Fe-4S] cluster as cofactor.

The protein localises to the cytoplasm. The enzyme catalyses adenosine(2503) in 23S rRNA + 2 reduced [2Fe-2S]-[ferredoxin] + 2 S-adenosyl-L-methionine = 2-methyladenosine(2503) in 23S rRNA + 5'-deoxyadenosine + L-methionine + 2 oxidized [2Fe-2S]-[ferredoxin] + S-adenosyl-L-homocysteine. It catalyses the reaction adenosine(37) in tRNA + 2 reduced [2Fe-2S]-[ferredoxin] + 2 S-adenosyl-L-methionine = 2-methyladenosine(37) in tRNA + 5'-deoxyadenosine + L-methionine + 2 oxidized [2Fe-2S]-[ferredoxin] + S-adenosyl-L-homocysteine. Its function is as follows. Specifically methylates position 2 of adenine 2503 in 23S rRNA and position 2 of adenine 37 in tRNAs. In Clostridium botulinum (strain ATCC 19397 / Type A), this protein is Probable dual-specificity RNA methyltransferase RlmN.